The following is a 312-amino-acid chain: Carbonic anhydrase 4 (312 aa).

An N-terminal signal peptide occupies residues 1–18 (MRLLLALLVLAAAPPQAR). An Alpha-carbonic anhydrase domain is found at 21–285 (SHWCYQIQVK…LGQRQVFRSG (265 aa)). 2 disulfides stabilise this stretch: cysteine 24–cysteine 36 and cysteine 46–cysteine 229. Asparagine 33 carries N-linked (GlcNAc...) asparagine glycosylation. Catalysis depends on histidine 88, which acts as the Proton donor/acceptor. 3 residues coordinate Zn(2+): histidine 115, histidine 117, and histidine 140. Residues asparagine 152 and asparagine 195 are each glycosylated (N-linked (GlcNAc...) asparagine). Substrate is bound at residue 225–226 (TT). Asparagine 265 is a glycosylation site (N-linked (GlcNAc...) asparagine). Serine 284 is lipidated: GPI-anchor amidated serine. Positions 285-312 (GAPGLLLAQPLPTLLAPVLACLTVGFLR) are cleaved as a propeptide — removed in mature form.

This sequence belongs to the alpha-carbonic anhydrase family. In terms of assembly, interacts with SLC4A4. Requires Zn(2+) as cofactor.

The protein resides in the cell membrane. It carries out the reaction hydrogencarbonate + H(+) = CO2 + H2O. Its activity is regulated as follows. Inhibited by acetazolamide. Catalyzes the reversible hydration of carbon dioxide into bicarbonate and protons and thus is essential to maintaining intracellular and extracellular pH. May stimulate the sodium/bicarbonate transporter activity of SLC4A4 that acts in pH homeostasis. It is essential for acid overload removal from the retina and retina epithelium, and acid release in the choriocapillaris in the choroid. The sequence is that of Carbonic anhydrase 4 (CA4) from Bos taurus (Bovine).